Consider the following 420-residue polypeptide: MPEPIRAVRGMNDILPDESGLWAFFEDTIRTWLAAYGYRNLRTPIVEQTDLFVRSIGEVTDIVEKEMYTFVDHLNGENLTLRPEGTASCVRAVIEHNLLYAGPQRLYYSGPMFRHERPQKGRYRQFHQVGVEALGFAGPDIDAELIVMCARLWRLLGISDVRLEISTLGSTESRSVYRARLISYLEKFCDDLDEDARRRLKTNPLRILDSKNPAMREILAGAPRLFDDLDEDSLAHFEALQRILRNQDISFEINNRLVRGLDYYNRTVFEWVTDKLGAQGTICAGGRYDGLIAQIGGKPAPACGFAMGIERILALMGENGAVGAHAIPDIYVVHQGEAAAEFSWKVAESLRDDGLKVVLHSGGGNFKAQMKKADASGARFAAIIGEDEVVAGQISIKPLREAAEQIRVDLAGAAALLGNI.

It belongs to the class-II aminoacyl-tRNA synthetase family. In terms of assembly, homodimer.

It localises to the cytoplasm. It catalyses the reaction tRNA(His) + L-histidine + ATP = L-histidyl-tRNA(His) + AMP + diphosphate + H(+). The protein is Histidine--tRNA ligase of Nitrosomonas europaea (strain ATCC 19718 / CIP 103999 / KCTC 2705 / NBRC 14298).